Reading from the N-terminus, the 273-residue chain is Putative pyruvate, phosphate dikinase regulatory protein (273 aa).

149–156 serves as a coordination point for ADP; that stretch reads GPSRTSKT.

It belongs to the pyruvate, phosphate/water dikinase regulatory protein family. PDRP subfamily.

It carries out the reaction N(tele)-phospho-L-histidyl/L-threonyl-[pyruvate, phosphate dikinase] + ADP = N(tele)-phospho-L-histidyl/O-phospho-L-threonyl-[pyruvate, phosphate dikinase] + AMP + H(+). The enzyme catalyses N(tele)-phospho-L-histidyl/O-phospho-L-threonyl-[pyruvate, phosphate dikinase] + phosphate + H(+) = N(tele)-phospho-L-histidyl/L-threonyl-[pyruvate, phosphate dikinase] + diphosphate. Bifunctional serine/threonine kinase and phosphorylase involved in the regulation of the pyruvate, phosphate dikinase (PPDK) by catalyzing its phosphorylation/dephosphorylation. The sequence is that of Putative pyruvate, phosphate dikinase regulatory protein from Rickettsia conorii (strain ATCC VR-613 / Malish 7).